The sequence spans 1755 residues: E3 ubiquitin-protein ligase UBR2 (1755 aa).

A2 is modified (N-acetylalanine). K94 participates in a covalent cross-link: Glycyl lysine isopeptide (Lys-Gly) (interchain with G-Cter in ubiquitin). The segment at 97 to 168 (HLCGRVFKVG…EGPYCQKHEL (72 aa)) adopts a UBR-type zinc-finger fold. Zn(2+)-binding residues include C99, C112, C115, C124, C127, H133, and H136. F148 contributes to the a peptide binding site. C149 is a binding site for Zn(2+). D150 serves as a coordination point for a peptide. C151 contacts Zn(2+). D153 provides a ligand contact to a peptide. K158 is covalently cross-linked (Glycyl lysine isopeptide (Lys-Gly) (interchain with G-Cter in ubiquitin)). C163 serves as a coordination point for Zn(2+). Residue K165 forms a Glycyl lysine isopeptide (Lys-Gly) (interchain with G-Cter in ubiquitin) linkage. H166 is a Zn(2+) binding site. Glycyl lysine isopeptide (Lys-Gly) (interchain with G-Cter in ubiquitin) cross-links involve residues K248, K255, and K470. S476 carries the post-translational modification Phosphoserine. Residues K488, K568, K779, and K789 each participate in a glycyl lysine isopeptide (Lys-Gly) (interchain with G-Cter in ubiquitin) cross-link. The interval 1004–1034 (ESSPTSPVAETEGTIMEESSRDKDKAERKRK) is disordered. Residues 1019 to 1054 (MEESSRDKDKAERKRKAEIARLRREKIMAQMSEMQR) are a coiled coil. Residues 1021–1034 (ESSRDKDKAERKRK) show a composition bias toward basic and acidic residues. Zn(2+) contacts are provided by C1108, C1111, C1168, H1170, H1173, C1176, C1210, and C1213. Residues 1108–1214 (CILCQEEQEV…NGEFLCPLCE (107 aa)) form an RING-type; atypical zinc finger. The disordered stretch occupies residues 1261–1287 (RKEESTPNNASTKNSENVDELQLPEGF). The segment covering 1266-1275 (TPNNASTKNS) has biased composition (polar residues). Glycyl lysine isopeptide (Lys-Gly) (interchain with G-Cter in ubiquitin) cross-links involve residues K1496, K1599, and K1689. S1694 carries the post-translational modification Phosphoserine. At Y1697 the chain carries Phosphotyrosine.

Belongs to the E3 ubiquitin-protein ligase UBR1-like family. Interacts with UBE2B; promotes the UBE2B-H2A interaction and the ubiquitination of histone H2A by UBE2B and UBR2. Interacts with RECQL4. Interacts with TEX19; does not lead to TEX19 degradation and stabilizes it. Interacts with CASP8. Interacts with ATXN3. Interacts with UBE2O. Post-translationally, dephosphorylated by DUSP22 at Ser-1694 and Tyr-1697, leading to subsequent ubiquitination and proteasomal degradation. 'Lys-48'-linked ubiquitinated at Lys-94, Lys-779 and Lys-1599 following DUSP22-mediated dephosphorylation of Ser-1694 and Tyr-1697 which promotes UBR2 interaction with the SCF(FBW1A) E3 ubiquitin-protein ligase complex. As to expression, broadly expressed, with highest levels in skeletal muscle, kidney and pancreas. Present in acinar cells of the pancreas (at protein level).

Its subcellular location is the nucleus. The protein resides in the chromosome. The enzyme catalyses S-ubiquitinyl-[E2 ubiquitin-conjugating enzyme]-L-cysteine + [acceptor protein]-L-lysine = [E2 ubiquitin-conjugating enzyme]-L-cysteine + N(6)-ubiquitinyl-[acceptor protein]-L-lysine.. The protein operates within protein modification; protein ubiquitination. Its function is as follows. E3 ubiquitin-protein ligase which is a component of the N-end rule pathway. Recognizes and binds to proteins bearing specific N-terminal residues (N-degrons) that are destabilizing according to the N-end rule, leading to their ubiquitination and subsequent degradation. Recognizes both type-1 and type-2 N-degrons, containing positively charged amino acids (Arg, Lys and His) and bulky and hydrophobic amino acids, respectively. Does not ubiquitinate proteins that are acetylated at the N-terminus. In contrast, it strongly binds methylated N-degrons. Plays a critical role in chromatin inactivation and chromosome-wide transcriptional silencing during meiosis via ubiquitination of histone H2A. Binds leucine and is a negative regulator of the leucine-mTOR signaling pathway, thereby controlling cell growth. Required for spermatogenesis, promotes, with Tex19.1, SPO11-dependent recombination foci to accumulate and drive robust homologous chromosome synapsis. Polyubiquitinates LINE-1 retrotransposon encoded, LIRE1, which induces degradation, inhibiting LINE-1 retrotransposon mobilization. Catalyzes ubiquitination and degradation of the N-terminal part of NLRP1 following NLRP1 activation by pathogens and other damage-associated signals: ubiquitination promotes degradation of the N-terminal part and subsequent release of the cleaved C-terminal part of NLRP1, which polymerizes and forms the NLRP1 inflammasome followed by host cell pyroptosis. Plays a role in T-cell receptor signaling by inducing 'Lys-63'-linked ubiquitination of lymphocyte cell-specific kinase LCK. This activity is regulated by DUSP22, which induces 'Lys-48'-linked ubiquitination of UBR2, leading to its proteasomal degradation by SCF E3 ubiquitin-protein ligase complex. The protein is E3 ubiquitin-protein ligase UBR2 (UBR2) of Homo sapiens (Human).